The primary structure comprises 204 residues: Probable GTP-binding protein EngB (204 aa).

The region spanning 27 to 201 is the EngB-type G domain; sequence SGIEIAFAGR…SEKLDQWFSP (175 aa). GTP-binding positions include 35-42, 62-66, 80-83, 147-150, and 180-182; these read GRSNAGKS, GRTQL, DLPG, TKAD, and FSA. The Mg(2+) site is built by S42 and T64.

This sequence belongs to the TRAFAC class TrmE-Era-EngA-EngB-Septin-like GTPase superfamily. EngB GTPase family. It depends on Mg(2+) as a cofactor.

In terms of biological role, necessary for normal cell division and for the maintenance of normal septation. This chain is Probable GTP-binding protein EngB, found in Histophilus somni (strain 129Pt) (Haemophilus somnus).